Reading from the N-terminus, the 465-residue chain is Asparagine--tRNA ligase (465 aa).

This sequence belongs to the class-II aminoacyl-tRNA synthetase family. In terms of assembly, homodimer.

It is found in the cytoplasm. It carries out the reaction tRNA(Asn) + L-asparagine + ATP = L-asparaginyl-tRNA(Asn) + AMP + diphosphate + H(+). The polypeptide is Asparagine--tRNA ligase (Clostridium perfringens (strain ATCC 13124 / DSM 756 / JCM 1290 / NCIMB 6125 / NCTC 8237 / Type A)).